A 212-amino-acid polypeptide reads, in one-letter code: Large ribosomal subunit protein uL3 (212 aa).

The tract at residues 130-158 (KRGSMTHGSKNHRLPGSTGAGTTPGRVYP) is disordered.

It belongs to the universal ribosomal protein uL3 family. As to quaternary structure, part of the 50S ribosomal subunit. Forms a cluster with proteins L14 and L19.

One of the primary rRNA binding proteins, it binds directly near the 3'-end of the 23S rRNA, where it nucleates assembly of the 50S subunit. The protein is Large ribosomal subunit protein uL3 of Gloeothece citriformis (strain PCC 7424) (Cyanothece sp. (strain PCC 7424)).